The sequence spans 247 residues: UPF0309 protein LMOf2365_2617 (247 aa).

The 184-residue stretch at Val31–Pro214 folds into the SIS domain.

This sequence belongs to the UPF0309 family.

The sequence is that of UPF0309 protein LMOf2365_2617 from Listeria monocytogenes serotype 4b (strain F2365).